We begin with the raw amino-acid sequence, 971 residues long: DNA-directed RNA polymerase subunit Rpo1N (971 aa).

Methionine 1 bears the Blocked amino end (Met) mark. 8 residues coordinate Zn(2+): cysteine 62, cysteine 65, cysteine 72, histidine 75, cysteine 102, cysteine 105, cysteine 149, and cysteine 152. The segment at 185–204 (SMQPDEDEDDAGVSPQELAE) is disordered. Mg(2+) is bound by residues aspartate 527, aspartate 529, and aspartate 531. Residues 951–971 (VEEPPTNLSEHGAAWEVESDD) form a disordered region.

This sequence belongs to the RNA polymerase beta' chain family. In terms of assembly, part of the RNA polymerase complex. Mg(2+) is required as a cofactor. The cofactor is Zn(2+). In terms of processing, the N-terminus is blocked.

Its subcellular location is the cytoplasm. It catalyses the reaction RNA(n) + a ribonucleoside 5'-triphosphate = RNA(n+1) + diphosphate. In terms of biological role, DNA-dependent RNA polymerase (RNAP) catalyzes the transcription of DNA into RNA using the four ribonucleoside triphosphates as substrates. Forms the clamp head domain. The chain is DNA-directed RNA polymerase subunit Rpo1N from Halobacterium salinarum (strain ATCC 29341 / DSM 671 / R1).